Consider the following 414-residue polypeptide: Probable cell wall biosynthesis protein LcpB (414 aa).

The segment at 1 to 108 (MDSPGQGEIA…PPVIAGDGGR (108 aa)) is disordered. Over 1 to 120 (MDSPGQGEIA…KAISFKPRGC (120 aa)) the chain is Cytoplasmic. The segment covering 9–23 (IARDSQGRPILDRYG) has biased composition (basic and acidic residues). A compositionally biased stretch (pro residues) spans 33-42 (RQTPPTPRTP). The segment covering 43-53 (PVNETRVYQPR) has biased composition (low complexity). The segment covering 54–80 (QTPPRQTPPRQTPPRQMPPRQTPPRQV) has biased composition (pro residues). The chain crosses the membrane as a helical span at residues 121 to 141 (LGTIAGVLAVGLVLVFVVTLW). Topologically, residues 142 to 414 (ADSKLNRVDA…GAEALFSSMR (273 aa)) are periplasmic.

It belongs to the LytR/CpsA/Psr (LCP) family.

The protein resides in the cell inner membrane. The chain is Probable cell wall biosynthesis protein LcpB from Corynebacterium glutamicum (strain ATCC 13032 / DSM 20300 / JCM 1318 / BCRC 11384 / CCUG 27702 / LMG 3730 / NBRC 12168 / NCIMB 10025 / NRRL B-2784 / 534).